The chain runs to 115 residues: Large ribosomal subunit protein bL20 (115 aa).

Belongs to the bacterial ribosomal protein bL20 family.

Binds directly to 23S ribosomal RNA and is necessary for the in vitro assembly process of the 50S ribosomal subunit. It is not involved in the protein synthesizing functions of that subunit. The chain is Large ribosomal subunit protein bL20 from Borrelia duttonii (strain Ly).